The following is a 186-amino-acid chain: Bis(5'-nucleosyl)-tetraphosphatase, symmetrical (186 aa).

The HD domain maps to 18–132 (RYIHTVGVMN…IYVADYIEPN (115 aa)). H21 provides a ligand contact to ADP. 3 residues coordinate Fe cation: H21, H50, and D51. ADP is bound by residues 51-54 (DYAK), H83, 109-110 (HT), D127, R133, and 170-175 (PVFPDT). D127 lines the Fe cation pocket.

It belongs to the Ap4A hydrolase YqeK family. Homodimer.

The enzyme catalyses P(1),P(4)-bis(5'-adenosyl) tetraphosphate + H2O = 2 ADP + 2 H(+). In terms of biological role, hydrolyzes diadenosine 5',5'''-P1,P4-tetraphosphate (Ap4A) to yield ADP. The sequence is that of Bis(5'-nucleosyl)-tetraphosphatase, symmetrical (yqeK) from Bacillus subtilis (strain 168).